Reading from the N-terminus, the 212-residue chain is Redox-sensing transcriptional repressor Rex (212 aa).

Positions 16–55 form a DNA-binding region, H-T-H motif; that stretch reads IYYRYLNILLDADKTRVSSTELSEAVKVDSATIRRDFSYF. 90–95 lines the NAD(+) pocket; it reads GVGNLG.

This sequence belongs to the transcriptional regulatory Rex family. In terms of assembly, homodimer.

The protein localises to the cytoplasm. Modulates transcription in response to changes in cellular NADH/NAD(+) redox state. In Levilactobacillus brevis (strain ATCC 367 / BCRC 12310 / CIP 105137 / JCM 1170 / LMG 11437 / NCIMB 947 / NCTC 947) (Lactobacillus brevis), this protein is Redox-sensing transcriptional repressor Rex.